The primary structure comprises 470 residues: Poly(A) polymerase catalytic subunit (470 aa).

Active-site residues include Asp192 and Asp194.

It belongs to the poxviridae poly(A) polymerase catalytic subunit family. In terms of assembly, heterodimer of a large (catalytic) subunit and a small (regulatory) subunit.

The catalysed reaction is RNA(n) + ATP = RNA(n)-3'-adenine ribonucleotide + diphosphate. Its function is as follows. Polymerase that creates the 3'-poly(A) tail of mRNA's. This chain is Poly(A) polymerase catalytic subunit (PAPL), found in Homo sapiens (Human).